The sequence spans 311 residues: uncharacterized protein (311 aa).

The N-terminal stretch at 1 to 13 (MLLSLIFPIAVLG) is a signal peptide. Asn115 carries N-linked (GlcNAc...) asparagine glycosylation.

Its subcellular location is the secreted. This is an uncharacterized protein from Encephalitozoon cuniculi (strain GB-M1) (Microsporidian parasite).